The following is a 472-amino-acid chain: Diaminopimelate decarboxylase (472 aa).

Positions methionine 1 to valine 23 are disordered. Lysine 97 is subject to N6-(pyridoxal phosphate)lysine. Pyridoxal 5'-phosphate is bound by residues glycine 283 and glutamate 325–arginine 328. 3 residues coordinate substrate: arginine 328, arginine 369, and tyrosine 373. The active-site Proton donor is the cysteine 400. 2 residues coordinate substrate: glutamate 401 and tyrosine 430. Pyridoxal 5'-phosphate is bound at residue tyrosine 430.

This sequence belongs to the Orn/Lys/Arg decarboxylase class-II family. LysA subfamily. Homodimer. The cofactor is pyridoxal 5'-phosphate.

It carries out the reaction meso-2,6-diaminopimelate + H(+) = L-lysine + CO2. It participates in amino-acid biosynthesis; L-lysine biosynthesis via DAP pathway; L-lysine from DL-2,6-diaminopimelate: step 1/1. Functionally, specifically catalyzes the decarboxylation of meso-diaminopimelate (meso-DAP) to L-lysine. This chain is Diaminopimelate decarboxylase, found in Mycobacterium leprae (strain TN).